The chain runs to 349 residues: N-acetyltaurine hydrolase (349 aa).

Positions 26, 28, 169, 201, 230, and 298 each coordinate a divalent metal cation.

This sequence belongs to the metallo-dependent hydrolases superfamily. Phosphotriesterase family. Requires a divalent metal cation as cofactor.

The protein localises to the cytoplasm. Its subcellular location is the cytosol. The enzyme catalyses N-acetyltaurine + H2O = taurine + acetate. It catalyses the reaction N-propanoyltaurine + H2O = propanoate + taurine. It carries out the reaction N-acetyl-L-methionine + H2O = L-methionine + acetate. The catalysed reaction is N-acetyl-L-isoleucine + H2O = L-isoleucine + acetate. The enzyme catalyses N-acetyl-L-leucine + H2O = L-leucine + acetate. It catalyses the reaction N-acetyl-L-valine + H2O = L-valine + acetate. Functionally, N-acetyltaurine hydrolase that catalyzes the hydrolysis of N-acetyltaurine into taurine and acetate. PTER also acts on other N-acetyl amino acids (Met, Ile, Leu, Val) and N-propionyltaurine, but at lower rates. The sequence is that of N-acetyltaurine hydrolase (pter) from Tetraodon nigroviridis (Spotted green pufferfish).